The sequence spans 312 residues: Protoheme IX farnesyltransferase (312 aa).

The next 8 helical transmembrane spans lie at Leu-12–Leu-32, Phe-41–Phe-61, Val-93–Trp-113, Leu-114–Leu-134, Asn-141–Thr-161, Phe-168–Trp-188, Val-240–Ile-260, and Ile-290–Val-310.

It belongs to the UbiA prenyltransferase family. Protoheme IX farnesyltransferase subfamily.

It localises to the cell membrane. It carries out the reaction heme b + (2E,6E)-farnesyl diphosphate + H2O = Fe(II)-heme o + diphosphate. It participates in porphyrin-containing compound metabolism; heme O biosynthesis; heme O from protoheme: step 1/1. In terms of biological role, converts heme B (protoheme IX) to heme O by substitution of the vinyl group on carbon 2 of heme B porphyrin ring with a hydroxyethyl farnesyl side group. In Corynebacterium jeikeium (strain K411), this protein is Protoheme IX farnesyltransferase.